Consider the following 23-residue polypeptide: Hongotoxin-4 (23 aa).

This sequence belongs to the short scorpion toxin superfamily. Potassium channel inhibitor family. Alpha-KTx 02 subfamily. In terms of tissue distribution, expressed by the venom gland.

The protein localises to the secreted. In terms of biological role, potent selective inhibitor of Kv1/KCNA voltage-gated potassium channels. In Centruroides limbatus (Bark scorpion), this protein is Hongotoxin-4.